Consider the following 215-residue polypeptide: LexA repressor (215 aa).

A DNA-binding region (H-T-H motif) is located at residues 28–48; it reads RAEIAAELGFSSPNAAEEHLR. Catalysis depends on for autocatalytic cleavage activity residues serine 133 and lysine 170.

The protein belongs to the peptidase S24 family. In terms of assembly, homodimer.

It catalyses the reaction Hydrolysis of Ala-|-Gly bond in repressor LexA.. Its function is as follows. Represses a number of genes involved in the response to DNA damage (SOS response), including recA and lexA. In the presence of single-stranded DNA, RecA interacts with LexA causing an autocatalytic cleavage which disrupts the DNA-binding part of LexA, leading to derepression of the SOS regulon and eventually DNA repair. The polypeptide is LexA repressor (Burkholderia cenocepacia (strain HI2424)).